Consider the following 255-residue polypeptide: DNA repair protein RecO (255 aa).

Belongs to the RecO family.

In terms of biological role, involved in DNA repair and RecF pathway recombination. The chain is DNA repair protein RecO from Acidithiobacillus ferrooxidans (strain ATCC 23270 / DSM 14882 / CIP 104768 / NCIMB 8455) (Ferrobacillus ferrooxidans (strain ATCC 23270)).